A 344-amino-acid polypeptide reads, in one-letter code: GDSL esterase/lipase At5g03590 (344 aa).

The first 19 residues, 1–19 (MHYLMKLFFSLSLFFGING), serve as a signal peptide directing secretion. Catalysis depends on Ser41, which acts as the Nucleophile. 3 N-linked (GlcNAc...) asparagine glycosylation sites follow: Asn126, Asn227, and Asn238. The active site involves Asp318.

Belongs to the 'GDSL' lipolytic enzyme family.

The protein localises to the secreted. In Arabidopsis thaliana (Mouse-ear cress), this protein is GDSL esterase/lipase At5g03590.